We begin with the raw amino-acid sequence, 454 residues long: Guanine deaminase (454 aa).

Residues His-82 and His-84 each coordinate Zn(2+). Substrate-binding positions include 84–87 (HASQ), 213–214 (RF), 240–243 (HISE), and Asp-330. The Zn(2+) site is built by His-240 and Asp-330. Ser-453 carries the phosphoserine modification.

The protein belongs to the metallo-dependent hydrolases superfamily. ATZ/TRZ family. In terms of assembly, homodimer. Requires Zn(2+) as cofactor.

The catalysed reaction is guanine + H2O + H(+) = xanthine + NH4(+). It participates in purine metabolism; guanine degradation; xanthine from guanine: step 1/1. Its function is as follows. Catalyzes the hydrolytic deamination of guanine, producing xanthine and ammonia. The protein is Guanine deaminase (GDA) of Pongo abelii (Sumatran orangutan).